A 379-amino-acid polypeptide reads, in one-letter code: MSDFLPFSRPAMGAEELAAVKTVLDSGWITTGPKNQELEAAFCRLTGNQYAVAVSSATAGMHIALMALGIGEGDEVITPSMTWVSTLNMIVLLGATPVMVDVDRDTLMVTPEHIEAAITPQTKAIIPVHYAGAPADLDAIYALGERYGIPVIEDAAHATGTSYKGRHIGARGTAIFSFHAIKNITCAEGGIVVTDNPQFADKLRSLKFHGLGVDAWDRQSGGRAPQAEVLAPGYKYNLPDLNAAIALAQLQKLDALNARRAAIAAQYHQAMADLPFQPLSLPSWEHIHAWHLFIIRVDEARCGITRDALMASLKTKGIGTGLHFRAAHTQKYYRERFPTLTLPDTEWNSERICSLPLFPDMTESDFDRVITALHQIAGQ.

Lys-182 carries the N6-(pyridoxal phosphate)lysine modification.

This sequence belongs to the DegT/DnrJ/EryC1 family. ArnB subfamily. As to quaternary structure, homodimer. Requires pyridoxal 5'-phosphate as cofactor.

The catalysed reaction is UDP-4-amino-4-deoxy-beta-L-arabinose + 2-oxoglutarate = UDP-beta-L-threo-pentopyranos-4-ulose + L-glutamate. It participates in nucleotide-sugar biosynthesis; UDP-4-deoxy-4-formamido-beta-L-arabinose biosynthesis; UDP-4-deoxy-4-formamido-beta-L-arabinose from UDP-alpha-D-glucuronate: step 2/3. It functions in the pathway bacterial outer membrane biogenesis; lipopolysaccharide biosynthesis. In terms of biological role, catalyzes the conversion of UDP-4-keto-arabinose (UDP-Ara4O) to UDP-4-amino-4-deoxy-L-arabinose (UDP-L-Ara4N). The modified arabinose is attached to lipid A and is required for resistance to polymyxin and cationic antimicrobial peptides. This Salmonella agona (strain SL483) protein is UDP-4-amino-4-deoxy-L-arabinose--oxoglutarate aminotransferase.